Consider the following 392-residue polypeptide: O-phospho-L-seryl-tRNA:Cys-tRNA synthase (392 aa).

Residues 84–85 (AR), Asn-191, and 214–216 (SGH) each bind pyridoxal 5'-phosphate. Residue Lys-217 is modified to N6-(pyridoxal phosphate)lysine.

It belongs to the SepCysS family. As to quaternary structure, homodimer. Interacts with SepRS. It depends on pyridoxal 5'-phosphate as a cofactor.

The enzyme catalyses O-phospho-L-seryl-tRNA(Cys) + hydrogen sulfide + H(+) = L-cysteinyl-tRNA(Cys) + phosphate. In terms of biological role, converts O-phospho-L-seryl-tRNA(Cys) (Sep-tRNA(Cys)) to L-cysteinyl-tRNA(Cys) (Cys-tRNA(Cys)). The polypeptide is O-phospho-L-seryl-tRNA:Cys-tRNA synthase (Methanopyrus kandleri (strain AV19 / DSM 6324 / JCM 9639 / NBRC 100938)).